We begin with the raw amino-acid sequence, 665 residues long: Soluble lamin-associated protein of 75 kDa (665 aa).

A disordered region spans residues 309–665 (AFASTSEGPE…GPGKKKAKLT (357 aa)). Polar residues predominate over residues 311 to 326 (ASTSEGPEKTPVSTRT). A compositionally biased stretch (basic residues) spans 327–338 (RSSHLKRPKIGK). Phosphoserine is present on residues S348 and S377. Acidic residues predominate over residues 376 to 397 (SSEEFLEEEPEQGVIDFEDESG). Residues 412–421 (QKQDGDKDSA) are compositionally biased toward basic and acidic residues. Residues 440 to 451 (TEDEDSTSEGLE) show a composition bias toward acidic residues. Residues S447 and S512 each carry the phosphoserine modification. 2 stretches are compositionally biased toward polar residues: residues 521–533 (LGSS…VSNI) and 553–566 (VSQN…SSVE). Phosphoserine occurs at positions 610, 613, and 630. Positions 646 to 665 (NLRRKAKGHKGPGKKKAKLT) are enriched in basic residues.

It belongs to the FAM169 family.

Its subcellular location is the nucleus envelope. It localises to the nucleus inner membrane. The polypeptide is Soluble lamin-associated protein of 75 kDa (Fam169a) (Mus musculus (Mouse)).